A 359-amino-acid polypeptide reads, in one-letter code: Isopentenyl-diphosphate delta-isomerase (359 aa).

Substrate is bound at residue 11-12 (RK). FMN contacts are provided by residues S68, 69–71 (GMT), S99, and N127. 99–101 (SQR) is a substrate binding site. A substrate-binding site is contributed by Q163. Residue E164 participates in Mg(2+) binding. FMN contacts are provided by residues K199, T229, 278-280 (GIR), and 299-300 (AL).

The protein belongs to the IPP isomerase type 2 family. Homooctamer. Dimer of tetramers. It depends on FMN as a cofactor. Requires NADPH as cofactor. Mg(2+) is required as a cofactor.

It is found in the cytoplasm. The enzyme catalyses isopentenyl diphosphate = dimethylallyl diphosphate. With respect to regulation, inhibited by 3,4-epoxy-3-methylbutyl diphosphate (EIPP). Its function is as follows. Involved in the biosynthesis of isoprenoids. Catalyzes the 1,3-allylic rearrangement of the homoallylic substrate isopentenyl (IPP) to its allylic isomer, dimethylallyl diphosphate (DMAPP). In Methanocaldococcus jannaschii (strain ATCC 43067 / DSM 2661 / JAL-1 / JCM 10045 / NBRC 100440) (Methanococcus jannaschii), this protein is Isopentenyl-diphosphate delta-isomerase.